A 77-amino-acid chain; its full sequence is Conotoxin ArMSGL-0143 (77 aa).

The N-terminal stretch at 1–22 (MSGLGIMLLTLLLLVFMETSHQ) is a signal peptide. Residues 23-44 (DAGEKQATQRDAINVRRRRSLT) constitute a propeptide that is removed on maturation. 3 cysteine pairs are disulfide-bonded: cysteine 51/cysteine 63, cysteine 55/cysteine 71, and cysteine 62/cysteine 75. Phenylalanine 76 is modified (phenylalanine amide).

It belongs to the conotoxin O3 superfamily. As to expression, expressed by the venom duct.

The protein resides in the secreted. The chain is Conotoxin ArMSGL-0143 from Conus arenatus (Sand-dusted cone).